A 492-amino-acid chain; its full sequence is Probable endopolygalacturonase D (492 aa).

Residues 1 to 16 form the signal peptide; the sequence is MKRSALILSFLPLVFG. A disulfide bridge connects residues Cys151 and Cys166. 4 PbH1 repeats span residues 216 to 238, 258 to 280, 281 to 319, and 320 to 341; these read GTSVTITGVEGHVIDGNGAAYWD, MYNSRIENLYIQNWPVHCFEIES, TEHLTVSGLTLNNSAGDAANSKSDGDPAAHNSDGFDIKE, and SSYFTLENTWVHNQDDCVAVTS. N-linked (GlcNAc...) asparagine glycosylation is present at Asn292. Residue Asp334 is the Proton donor of the active site. Cys336 and Cys352 are disulfide-bonded. His356 is an active-site residue. PbH1 repeat units lie at residues 371-392, 400-422, and 434-478; these read VNGVTFSNSQVISSQNGCRIKT, VYNIRYENITLSDISDYGIDVQQ, and TNGV…SITG. N-linked (GlcNAc...) asparagine glycans are attached at residues Asn407 and Asn441. 2 cysteine pairs are disulfide-bonded: Cys461/Cys466 and Cys484/Cys491.

The protein belongs to the glycosyl hydrolase 28 family.

The protein localises to the secreted. The enzyme catalyses (1,4-alpha-D-galacturonosyl)n+m + H2O = (1,4-alpha-D-galacturonosyl)n + (1,4-alpha-D-galacturonosyl)m.. Involved in maceration and soft-rotting of plant tissue. Hydrolyzes the 1,4-alpha glycosidic bonds of de-esterified pectate in the smooth region of the plant cell wall. The sequence is that of Probable endopolygalacturonase D (pgaD) from Aspergillus flavus (strain ATCC 200026 / FGSC A1120 / IAM 13836 / NRRL 3357 / JCM 12722 / SRRC 167).